A 1017-amino-acid polypeptide reads, in one-letter code: Rho-GTPase-activating protein LRG1 (1017 aa).

An N-acetylmethionine modification is found at Met1. LIM zinc-binding domains lie at 28-88 (CARC…LCQY) and 98-148 (CHVC…CKYH). An LIM zinc-binding 3; truncated domain is found at 155–184 (KRCKGCEFPISDQYIEFPKGEEIHCWHPEC). The 56-residue stretch at 419 to 474 (CAGCNKYIQEECIQFYEHRWHIACFTCSSCHKNINPRSLTDPTFNKEKKKILCSHC) folds into the LIM zinc-binding 4 domain. Ser562 is subject to Phosphoserine. The interval 570-602 (TDLNDPTKQGDSKNLVIQTDDPSSSQQVSTREN) is disordered. A compositionally biased stretch (polar residues) spans 584-602 (LVIQTDDPSSSQQVSTREN). The 224-residue stretch at 730–953 (APLDVLCEKW…YLITHNEEMA (224 aa)) folds into the Rho-GAP domain.

As to quaternary structure, interacts with CDC42, RHO1 and RHO2.

Its subcellular location is the cytoplasm. It localises to the bud. The protein resides in the bud neck. Functionally, acts in signal transduction. Activates CDC42, RHO1 and RHO2. Negatively regulates 1,3-beta-glucan synthesis. May be responsible for the down-regulation of CDC42 during mating. The sequence is that of Rho-GTPase-activating protein LRG1 (LRG1) from Saccharomyces cerevisiae (strain ATCC 204508 / S288c) (Baker's yeast).